The following is a 305-amino-acid chain: Ribonucleoside-diphosphate reductase small subunit (305 aa).

Residues Glu64, Glu94, and His97 each coordinate Fe cation. Residue Tyr101 is part of the active site. Residues 150–170 form a helical membrane-spanning segment; the sequence is ILMFLIVEGIYFISSFYSISL. The Fe cation site is built by Glu157, Glu191, and His194.

It belongs to the ribonucleoside diphosphate reductase small chain family. In terms of assembly, heterotetramer composed of a homodimer of the large subunit (R1) and a homodimer of the small subunit (R2). Larger multisubunit protein complex are also active, composed of (R1)n(R2)n. Fe cation serves as cofactor.

Its subcellular location is the host membrane. The enzyme catalyses a 2'-deoxyribonucleoside 5'-diphosphate + [thioredoxin]-disulfide + H2O = a ribonucleoside 5'-diphosphate + [thioredoxin]-dithiol. Its function is as follows. Ribonucleoside-diphosphate reductase holoenzyme provides the precursors necessary for viral DNA synthesis. Allows virus growth in non-dividing cells, as well as reactivation from latency in infected hosts. Catalyzes the biosynthesis of deoxyribonucleotides from the corresponding ribonucleotides. The protein is Ribonucleoside-diphosphate reductase small subunit of Homo sapiens (Human).